The chain runs to 272 residues: Type III pantothenate kinase (272 aa).

6-13 (DVRNTHTV) contacts ATP. Position 109-112 (109-112 (GADR)) interacts with substrate. Asp111 functions as the Proton acceptor in the catalytic mechanism. Asp131 provides a ligand contact to K(+). Ser134 is a binding site for ATP. Thr186 contacts substrate.

The protein belongs to the type III pantothenate kinase family. Homodimer. Requires NH4(+) as cofactor. K(+) is required as a cofactor.

It is found in the cytoplasm. It carries out the reaction (R)-pantothenate + ATP = (R)-4'-phosphopantothenate + ADP + H(+). It functions in the pathway cofactor biosynthesis; coenzyme A biosynthesis; CoA from (R)-pantothenate: step 1/5. Functionally, catalyzes the phosphorylation of pantothenate (Pan), the first step in CoA biosynthesis. This chain is Type III pantothenate kinase, found in Mycobacterium marinum (strain ATCC BAA-535 / M).